We begin with the raw amino-acid sequence, 80 residues long: MTEEEIFNKIADMISERFSIDRDKITKDLNFQNDLDADSIDFVELVMDLEDTFGAEIPDDDAEKLQTVGEAVEYIKSHQN.

The 79-residue stretch at 1-79 folds into the Carrier domain; that stretch reads MTEEEIFNKI…EAVEYIKSHQ (79 aa). Serine 39 carries the post-translational modification O-(pantetheine 4'-phosphoryl)serine.

This sequence belongs to the acyl carrier protein (ACP) family. In terms of processing, 4'-phosphopantetheine is transferred from CoA to a specific serine of apo-ACP by AcpS. This modification is essential for activity because fatty acids are bound in thioester linkage to the sulfhydryl of the prosthetic group.

The protein resides in the cytoplasm. It participates in lipid metabolism; fatty acid biosynthesis. Functionally, carrier of the growing fatty acid chain in fatty acid biosynthesis. The polypeptide is Acyl carrier protein (Lactobacillus johnsonii (strain CNCM I-12250 / La1 / NCC 533)).